Reading from the N-terminus, the 453-residue chain is Ribosomal protein uS12 methylthiotransferase RimO (453 aa).

An MTTase N-terminal domain is found at 6-116 (PTVGIVSLGC…VLTAVHEAIA (111 aa)). [4Fe-4S] cluster is bound by residues Cys-15, Cys-51, Cys-80, Cys-148, Cys-152, and Cys-155. In terms of domain architecture, Radical SAM core spans 134-371 (LTPKHFAYLK…MQLQQQISAN (238 aa)). Residues 374–440 (QAKIGKTIQV…EYDLWATPVG (67 aa)) form the TRAM domain.

Belongs to the methylthiotransferase family. RimO subfamily. Requires [4Fe-4S] cluster as cofactor.

The protein resides in the cytoplasm. It carries out the reaction L-aspartate(89)-[ribosomal protein uS12]-hydrogen + (sulfur carrier)-SH + AH2 + 2 S-adenosyl-L-methionine = 3-methylsulfanyl-L-aspartate(89)-[ribosomal protein uS12]-hydrogen + (sulfur carrier)-H + 5'-deoxyadenosine + L-methionine + A + S-adenosyl-L-homocysteine + 2 H(+). Functionally, catalyzes the methylthiolation of an aspartic acid residue of ribosomal protein uS12. The sequence is that of Ribosomal protein uS12 methylthiotransferase RimO from Hydrogenovibrio crunogenus (strain DSM 25203 / XCL-2) (Thiomicrospira crunogena).